A 338-amino-acid polypeptide reads, in one-letter code: Holliday junction branch migration complex subunit RuvB (338 aa).

Residues 1 to 179 form a large ATPase domain (RuvB-L) region; sequence MTDLTTPIRT…FGIPVRLNFY (179 aa). L18, R19, G60, K63, T64, T65, R169, Y179, and R216 together coordinate ATP. T64 serves as a coordination point for Mg(2+). Residues 180–250 form a small ATPAse domain (RuvB-S) region; it reads THAELEQVIG…AADAALNRLE (71 aa). Positions 253–338 are head domain (RuvB-H); it reads ALGLDAMDRR…AGSQDGLFDK (86 aa). DNA-binding residues include R289, R308, and R313.

Belongs to the RuvB family. Homohexamer. Forms an RuvA(8)-RuvB(12)-Holliday junction (HJ) complex. HJ DNA is sandwiched between 2 RuvA tetramers; dsDNA enters through RuvA and exits via RuvB. An RuvB hexamer assembles on each DNA strand where it exits the tetramer. Each RuvB hexamer is contacted by two RuvA subunits (via domain III) on 2 adjacent RuvB subunits; this complex drives branch migration. In the full resolvosome a probable DNA-RuvA(4)-RuvB(12)-RuvC(2) complex forms which resolves the HJ.

It localises to the cytoplasm. The catalysed reaction is ATP + H2O = ADP + phosphate + H(+). The RuvA-RuvB-RuvC complex processes Holliday junction (HJ) DNA during genetic recombination and DNA repair, while the RuvA-RuvB complex plays an important role in the rescue of blocked DNA replication forks via replication fork reversal (RFR). RuvA specifically binds to HJ cruciform DNA, conferring on it an open structure. The RuvB hexamer acts as an ATP-dependent pump, pulling dsDNA into and through the RuvAB complex. RuvB forms 2 homohexamers on either side of HJ DNA bound by 1 or 2 RuvA tetramers; 4 subunits per hexamer contact DNA at a time. Coordinated motions by a converter formed by DNA-disengaged RuvB subunits stimulates ATP hydrolysis and nucleotide exchange. Immobilization of the converter enables RuvB to convert the ATP-contained energy into a lever motion, pulling 2 nucleotides of DNA out of the RuvA tetramer per ATP hydrolyzed, thus driving DNA branch migration. The RuvB motors rotate together with the DNA substrate, which together with the progressing nucleotide cycle form the mechanistic basis for DNA recombination by continuous HJ branch migration. Branch migration allows RuvC to scan DNA until it finds its consensus sequence, where it cleaves and resolves cruciform DNA. This Sphingopyxis alaskensis (strain DSM 13593 / LMG 18877 / RB2256) (Sphingomonas alaskensis) protein is Holliday junction branch migration complex subunit RuvB.